Here is a 552-residue protein sequence, read N- to C-terminus: HTH-type transcriptional regulator SgrR (552 aa).

The region spanning 1-116 (MPSGRLQQQF…LISHLGRSFR (116 aa)) is the HTH marR-type domain. Positions 26–49 (LNELADLLNCSRRHMRTLLNTMQA) form a DNA-binding region, H-T-H motif. The solute-binding stretch occupies residues 163-493 (ELEADIAHHW…RDWQDDAAQW (331 aa)).

Activates the small RNA gene sgrS under glucose-phosphate stress conditions as well as yfdZ. Represses its own transcription under both stress and non-stress conditions. Might act as a sensor of the intracellular accumulation of phosphoglucose by binding these molecules in its C-terminal solute-binding domain. The sequence is that of HTH-type transcriptional regulator SgrR from Salmonella typhi.